Here is a 150-residue protein sequence, read N- to C-terminus: Large ribosomal subunit protein uL23m (150 aa).

This sequence belongs to the universal ribosomal protein uL23 family. As to quaternary structure, component of the mitochondrial ribosome large subunit (39S) which comprises a 16S rRNA and about 50 distinct proteins.

The protein resides in the mitochondrion. The sequence is that of Large ribosomal subunit protein uL23m (mRpL23) from Drosophila melanogaster (Fruit fly).